Reading from the N-terminus, the 278-residue chain is Cyclin-C (278 aa).

Residues 41-139 (NVIQALGEHL…ILECEFYLLE (99 aa)) enclose the Cyclin N-terminal domain. The disordered stretch occupies residues 247–278 (TILSKMPKPKPPPNSEGEQGPNGSQNSSYSQS). The segment covering 267–278 (PNGSQNSSYSQS) has biased composition (polar residues). Ser270 is modified (phosphoserine).

Belongs to the cyclin family. Cyclin C subfamily. Component of the Mediator complex, which is composed of MED1, MED4, MED6, MED7, MED8, MED9, MED10, MED11, MED12, MED13, MED13L, MED14, MED15, MED16, MED17, MED18, MED19, MED20, MED21, MED22, MED23, MED24, MED25, MED26, MED27, MED29, MED30, MED31, CCNC, CDK8 and CDC2L6/CDK11. The MED12, MED13, CCNC and CDK8 subunits form a distinct module termed the CDK8 module. Mediator containing the CDK8 module is less active than Mediator lacking this module in supporting transcriptional activation. Individual preparations of the Mediator complex lacking one or more distinct subunits have been variously termed ARC, CRSP, DRIP, PC2, SMCC and TRAP. The cylin/CDK pair formed by CCNC/CDK8 also associates with the large subunit of RNA polymerase II.

It is found in the nucleus. In terms of biological role, component of the Mediator complex, a coactivator involved in regulated gene transcription of nearly all RNA polymerase II-dependent genes. Mediator functions as a bridge to convey information from gene-specific regulatory proteins to the basal RNA polymerase II transcription machinery. Mediator is recruited to promoters by direct interactions with regulatory proteins and serves as a scaffold for the assembly of a functional preinitiation complex with RNA polymerase II and the general transcription factors. Binds to and activates cyclin-dependent kinase CDK8 that phosphorylates the CTD (C-terminal domain) of the large subunit of RNA polymerase II (RNAp II), which may inhibit the formation of a transcription initiation complex. The sequence is that of Cyclin-C (Ccnc) from Rattus norvegicus (Rat).